The sequence spans 558 residues: Dihydroxy-acid dehydratase (558 aa).

C50 is a binding site for [2Fe-2S] cluster. D82 contacts Mg(2+). Position 123 (C123) interacts with [2Fe-2S] cluster. Mg(2+)-binding residues include D124 and K125. K125 bears the N6-carboxylysine mark. Residue C195 coordinates [2Fe-2S] cluster. Position 447 (E447) interacts with Mg(2+). The active-site Proton acceptor is S472.

This sequence belongs to the IlvD/Edd family. Homodimer. [2Fe-2S] cluster serves as cofactor. The cofactor is Mg(2+).

The enzyme catalyses (2R)-2,3-dihydroxy-3-methylbutanoate = 3-methyl-2-oxobutanoate + H2O. It catalyses the reaction (2R,3R)-2,3-dihydroxy-3-methylpentanoate = (S)-3-methyl-2-oxopentanoate + H2O. It participates in amino-acid biosynthesis; L-isoleucine biosynthesis; L-isoleucine from 2-oxobutanoate: step 3/4. The protein operates within amino-acid biosynthesis; L-valine biosynthesis; L-valine from pyruvate: step 3/4. Functionally, functions in the biosynthesis of branched-chain amino acids. Catalyzes the dehydration of (2R,3R)-2,3-dihydroxy-3-methylpentanoate (2,3-dihydroxy-3-methylvalerate) into 2-oxo-3-methylpentanoate (2-oxo-3-methylvalerate) and of (2R)-2,3-dihydroxy-3-methylbutanoate (2,3-dihydroxyisovalerate) into 2-oxo-3-methylbutanoate (2-oxoisovalerate), the penultimate precursor to L-isoleucine and L-valine, respectively. This chain is Dihydroxy-acid dehydratase, found in Saccharolobus islandicus (strain Y.N.15.51 / Yellowstone #2) (Sulfolobus islandicus).